The chain runs to 354 residues: MVSGVTYLKRGAVFGSGAFGTALACVLAKKCESVSVWHMNANEARVVNQKHENVYFLPGAPLPANLTFTADAEECAKGAEIVLFVIPTQFLRGFLQKNSHILRNHVVSRNVPVVMCSKGIERSSLLFPAQILEEFLPNYPIGVIAGPSFAIEVAKGMLTNVCTAAADINMARKIQRIMTTSDGSFRCWATTDVIGCEIASAMKNVLAIASGALKGLGTENNARAALISRGLLEIRDLTLALGGTGEAVFGLPGLGDLLLTCSSELSRNFTVGMKLGQGISLEEIKRTSKAVAEGVATAEPLERLAKKHNADLPICHEVYNVLYANGCAKRSFKKLNSCKLADEGLPALPRTSKM.

Residues 15-20 (GSGAFG), F90, K118, and A150 each bind NAD(+). K118 provides a ligand contact to substrate. K203 serves as the catalytic Proton acceptor. R267 and E293 together coordinate NAD(+). 267–268 (RN) contributes to the substrate binding site. Positions 352-354 (SKM) match the Microbody targeting signal motif.

This sequence belongs to the NAD-dependent glycerol-3-phosphate dehydrogenase family.

It localises to the glycosome. The enzyme catalyses sn-glycerol 3-phosphate + NAD(+) = dihydroxyacetone phosphate + NADH + H(+). The polypeptide is Glycerol-3-phosphate dehydrogenase [NAD(+)], glycosomal (GPD) (Trypanosoma brucei brucei).